Here is a 479-residue protein sequence, read N- to C-terminus: Ribosomal RNA small subunit methyltransferase F (479 aa).

Residues 125 to 131 (AAAPGSK), E149, D176, and D194 each bind S-adenosyl-L-methionine. The Nucleophile role is filled by C247.

It belongs to the class I-like SAM-binding methyltransferase superfamily. RsmB/NOP family.

Its subcellular location is the cytoplasm. The catalysed reaction is cytidine(1407) in 16S rRNA + S-adenosyl-L-methionine = 5-methylcytidine(1407) in 16S rRNA + S-adenosyl-L-homocysteine + H(+). Its function is as follows. Specifically methylates the cytosine at position 1407 (m5C1407) of 16S rRNA. This chain is Ribosomal RNA small subunit methyltransferase F, found in Salmonella schwarzengrund (strain CVM19633).